A 446-amino-acid polypeptide reads, in one-letter code: MEEKAGLRHLQNQQNEPSQDPHQCADPCPALHSDRNHLNKEAEAMEGQNPTCSRHESAYPIQSQVSKSKKQRNYVDGAAVDDLKNLWDRLQTLQQSLTEMPYAEGLKPLKNFTSFEELLSMGGDSLLNDLLDIQDSITQCCIRASKYLNKEGNCTSLNYYKQPFIAAVYGPTGCGKSQLLRNLMSAQLIVPTPETVFFITPQVDMIPPQEIAAWETQICEGNFLAGPENTVVPQSGSIMPRFIQMSYAQLTKDENYDVTSPNNIFANAASKGPIAIVMDECMEDLGGNRGIAKFFHAFPSKLLDRFPKCTGYSVIVVLHNMNPRRDQGGNIANLKIQAKVHMISPKVHPSQLNRFINIYTKGQPTAISLLLKDIFNYHRLNTNFDWIVYNTEPIDNCMHWMYLSPQEGLIPMYLNIQGKLYQALERIHRTLTDRQRWTRYYHSKKK.

Residues 1 to 72 (MEEKAGLRHL…SQVSKSKKQR (72 aa)) are disordered. Over residues 10–21 (LQNQQNEPSQDP) the composition is skewed to polar residues. Positions 32-43 (HSDRNHLNKEAE) are enriched in basic and acidic residues. 170–177 (GPTGCGKS) contacts ATP. The tract at residues 439-446 (RYYHSKKK) is DNA-binding.

The protein belongs to the adenoviridae packaging protein 1 family. As to quaternary structure, homodimer. Part of a genome packaging complex composed of packaging proteins 1, 2 and 3; this complex specifically binds to the packaging sequence on the left end of viral genomic DNA and performs packaging of the viral genome. Interacts with protein 33K.

The protein localises to the virion. The protein resides in the host nucleus. Its subcellular location is the host nucleoplasm. It is found in the host nucleolus. Its function is as follows. Component of the packaging machinery which encapsidates the viral DNA into preformed capsids and transcriptional activator of the viral major late promoter (MLP). Binds, along with packaging proteins 2 and 3, to the specific packaging sequence on the left end of viral genomic DNA and displays ATPase activity thereby providing the power stroke of the packaging machinery. The activity of packaging protein IVa2 is stimulated by protein 33K which acts as a terminase. May be the protein that pumps DNA into the capsid powered by ATP hydrolysis. Specifically binds to the 5'-CG-3' nucleotides of the repeats making up the packaging sequence. Component of the DEF-A and DEF-B transcription factors that bind downstream elements of the major late promoter (MLP), and stimulate transcription from the MLP after initiation of viral DNA replication. DEF-A is a heterodimer packaging proteins 1 and 2 and DEF-B is a homodimer of packaging protein 1. The polypeptide is Packaging protein 1 (Canine adenovirus serotype 1 (strain CLL) (CAdV-1)).